The primary structure comprises 411 residues: O-glucosyltransferase rumi (411 aa).

Residues 1–20 form the signal peptide; it reads MLINHLIVVLLISLVGTGGA. Disulfide bonds link cysteine 64–cysteine 75, cysteine 73–cysteine 378, cysteine 120–cysteine 126, and cysteine 282–cysteine 305. Aspartate 151 (proton donor/acceptor) is an active-site residue. The interval 192–197 is interaction with the consensus sequence C-X-S-X-[PA]-C in peptide substrates; that stretch reads ATKLHP. Residues 229–233, arginine 237, 276–278, and 294–298 each bind UDP-alpha-D-glucose; these read RGSRT, VSF, and AASFR. The short motif at 408–411 is the Prevents secretion from ER element; it reads KDEL.

It belongs to the glycosyltransferase 90 family.

It localises to the endoplasmic reticulum lumen. It functions in the pathway protein modification; protein glycosylation. Its function is as follows. Protein O-glucosyltransferase. Catalyzes the reaction that attaches glucose through an O-glycosidic linkage to a conserved serine residue found in the consensus sequence C-X-S-X-[PA]-C in epidermal growth factor-like repeats. Regulates Notch signaling by glucosylating Notch in the ER, glucosylation is required for the correct folding and cleavage of Notch. This Drosophila melanogaster (Fruit fly) protein is O-glucosyltransferase rumi.